A 408-amino-acid polypeptide reads, in one-letter code: Probable fructose-2,6-bisphosphatase C732.02c (408 aa).

Residue 16 to 24 (GLPASGKTS) participates in ATP binding. Residue Asp88 is part of the active site. Residue 127–132 (NITDMC) coordinates ATP. Tyr157 is a binding site for beta-D-fructose 6-phosphate. A beta-D-fructose 2,6-bisphosphate-binding site is contributed by Arg213. His214 (tele-phosphohistidine intermediate) is an active-site residue. Residues Asn220 and Gly226 each coordinate beta-D-fructose 2,6-bisphosphate. Glu285 acts as the Proton donor/acceptor in catalysis. Residues Tyr296, Arg310, Lys314, Tyr325, Gln351, and Arg355 each coordinate beta-D-fructose 2,6-bisphosphate. 307–310 (AELR) contacts ATP. Residues 351 to 355 (QAILR) and Tyr387 each bind ATP.

It in the C-terminal section; belongs to the phosphoglycerate mutase family.

It catalyses the reaction beta-D-fructose 2,6-bisphosphate + H2O = beta-D-fructose 6-phosphate + phosphate. In terms of biological role, this is predominantly if not solely a fructose-2,6-bisphosphatase. The chain is Probable fructose-2,6-bisphosphatase C732.02c from Schizosaccharomyces pombe (strain 972 / ATCC 24843) (Fission yeast).